The sequence spans 346 residues: Calcium homeostasis modulator protein 1 (346 aa).

Residues 1 to 21 (MMDKFRMIFQFLQSNQESFMN) lie on the Cytoplasmic side of the membrane. The central pore stretch occupies residues 10-37 (QFLQSNQESFMNGICGIMALASAQMYSA). Residues 22 to 37 (GICGIMALASAQMYSA) form a helical membrane-spanning segment. The Extracellular segment spans residues 38 to 49 (FDFNCPCLPGYN). Cystine bridges form between cysteine 42-cysteine 127 and cysteine 44-cysteine 161. A helical transmembrane segment spans residues 50-72 (AAYSAGILLAPPLVLFLLGLVMN). Residues 63 to 70 (VLFLLGLV) form a phospholipid-binding region. At 73–99 (NNVSMLAEEWKRPLGRRAKDPAVLRYM) the chain is on the cytoplasmic side. A helical membrane pass occupies residues 100 to 125 (FCSMAQRALIAPVVWVAVTLLDGKCF). A lipid anchor (S-palmitoyl cysteine) is attached at cysteine 101. Positions 105–117 (QRALIAPVVWVAV) are phospholipid-binding. The Extracellular portion of the chain corresponds to 126-180 (LCAFCTAVPVSALGNGSLAPGLPAPELARLLARVPCPEIYDGDWLLAREVAVRYL). Residue asparagine 140 is glycosylated (N-linked (GlcNAc...) asparagine). Residues 181 to 206 (RCISQALGWSFVLLTTLLAFVVRSVR) traverse the membrane as a helical segment. The interval 192-202 (VLLTTLLAFVV) is phospholipid-binding. Over 207-346 (PCFTQAAFLK…KEVATYFSKV (140 aa)) the chain is Cytoplasmic. Cysteine 208 is lipidated: S-palmitoyl cysteine. Residues 313 to 346 (LRLGQEEPPLMGNGWAGGGPRPPRKEVATYFSKV) form a disordered region.

It belongs to the CALHM family. In terms of assembly, oligomerizes to form hexamers and octamers. Does not form gap junctions. Associates with CALHM3 as a pore-forming subunit in a hetero-hexameric channel complex. Post-translationally, N-glycosylated. Assembly with CALHM3 is associated with N-glycan remodeling and formation of hybrid complex- and high mannose-type glycochains. This N-glycan processing regulates channel trafficking and gating kinetics. Palmitoylated by ZDHHC3, ZDHHC20 and possibly ZDHHC7. Palmitoylation regulates voltage-dependent gating of the channel by shifting it toward more depolarized potentials. Predominantly expressed in adult brain. Detected also in retinoic acid-differentiated SH-SY5Y cells. Specifically expressed in circumvallate taste bud cells.

The protein resides in the cell membrane. It localises to the endoplasmic reticulum membrane. Its subcellular location is the basolateral cell membrane. The catalysed reaction is ATP(in) = ATP(out). It carries out the reaction Ca(2+)(in) = Ca(2+)(out). It catalyses the reaction Mg(2+)(in) = Mg(2+)(out). The enzyme catalyses Na(+)(in) = Na(+)(out). The catalysed reaction is K(+)(in) = K(+)(out). It carries out the reaction Li(+)(in) = Li(+)(out). It catalyses the reaction Rb(+)(in) = Rb(+)(out). The enzyme catalyses Cs(+)(in) = Cs(+)(out). The catalysed reaction is chloride(in) = chloride(out). With respect to regulation, regulated by membrane voltage and extracellular Ca(2+). Inhibited by Gd(3+), ruthenium red, and Zn(2+) and partially inhibited by 2-aminoethoxydiphenyl borate. Functionally, pore-forming subunit of gustatory voltage-gated ion channels required for sensory perception of sweet, bitter and umami tastes. With CALHM3 forms a fast-activating voltage-gated ATP-release channel in type II taste bud cells, ATP acting as a neurotransmitter to activate afferent neural gustatory pathways. Acts both as a voltage-gated and calcium-activated ion channel: mediates neuronal excitability in response to membrane depolarization and low extracellular Ca(2+) concentration. Has poor ion selectivity and forms a wide pore (around 14 Angstroms) that mediates permeation of small ions including Ca(2+), Na(+), K(+) and Cl(-), as well as larger ions such as ATP(4-). Mediates Ca(2+) influx and downstream activation of the ERK1 and ERK2 cascade in neurons. Triggers endoplasmic reticulum stress by reducing the Ca(2+) content of the endoplasmic reticulum. May indirectly control amyloid precursor protein (APP) proteolysis and aggregated amyloid-beta (Abeta) peptides levels in a Ca(2+)-dependent manner. The protein is Calcium homeostasis modulator protein 1 of Homo sapiens (Human).